The chain runs to 194 residues: MAGFRLLVGLGNPGSEYENTRHNAGAQWIEALARQSQCSLRSEKKFFGQFGKVYIAGEECYLLIPTTYMNLSGKAVQAVCQFYKIPPEEVLVIHDELDIPPGTAKLKQGGGHGGHNGLKDIISKLANNREFGRLRIGIGHPGHASQVANYVLKKAAPDDYTKIEQAIDESLRYVDDIVRGNLNAVMNQLHSFKA.

Tyr-17 is a binding site for tRNA. Residue His-22 is the Proton acceptor of the active site. Residues Tyr-68, Asn-70, and Asn-116 each coordinate tRNA.

Belongs to the PTH family. As to quaternary structure, monomer.

The protein localises to the cytoplasm. It catalyses the reaction an N-acyl-L-alpha-aminoacyl-tRNA + H2O = an N-acyl-L-amino acid + a tRNA + H(+). Hydrolyzes ribosome-free peptidyl-tRNAs (with 1 or more amino acids incorporated), which drop off the ribosome during protein synthesis, or as a result of ribosome stalling. Functionally, catalyzes the release of premature peptidyl moieties from peptidyl-tRNA molecules trapped in stalled 50S ribosomal subunits, and thus maintains levels of free tRNAs and 50S ribosomes. This is Peptidyl-tRNA hydrolase from Marinomonas sp. (strain MWYL1).